A 123-amino-acid polypeptide reads, in one-letter code: Small ribosomal subunit protein uS12 (123 aa).

Position 89 is a 3-methylthioaspartic acid (Asp-89).

Belongs to the universal ribosomal protein uS12 family. In terms of assembly, part of the 30S ribosomal subunit. Contacts proteins S8 and S17. May interact with IF1 in the 30S initiation complex.

Functionally, with S4 and S5 plays an important role in translational accuracy. In terms of biological role, interacts with and stabilizes bases of the 16S rRNA that are involved in tRNA selection in the A site and with the mRNA backbone. Located at the interface of the 30S and 50S subunits, it traverses the body of the 30S subunit contacting proteins on the other side and probably holding the rRNA structure together. The combined cluster of proteins S8, S12 and S17 appears to hold together the shoulder and platform of the 30S subunit. This is Small ribosomal subunit protein uS12 from Caulobacter sp. (strain K31).